We begin with the raw amino-acid sequence, 570 residues long: Urease subunit alpha (570 aa).

One can recognise a Urease domain in the interval 131–570; sequence GGMDSHIHFI…LPMAQRYFLF (440 aa). His-136, His-138, and Lys-219 together coordinate Ni(2+). At Lys-219 the chain carries N6-carboxylysine. His-221 is a binding site for substrate. Ni(2+) contacts are provided by His-248 and His-274. His-322 (proton donor) is an active-site residue. Asp-362 contacts Ni(2+).

This sequence belongs to the metallo-dependent hydrolases superfamily. Urease alpha subunit family. In terms of assembly, heterotrimer of UreA (gamma), UreB (beta) and UreC (alpha) subunits. Three heterotrimers associate to form the active enzyme. Requires Ni cation as cofactor. In terms of processing, carboxylation allows a single lysine to coordinate two nickel ions.

It is found in the cytoplasm. It catalyses the reaction urea + 2 H2O + H(+) = hydrogencarbonate + 2 NH4(+). The protein operates within nitrogen metabolism; urea degradation; CO(2) and NH(3) from urea (urease route): step 1/1. The chain is Urease subunit alpha from Sinorhizobium fredii (strain NBRC 101917 / NGR234).